A 37-amino-acid polypeptide reads, in one-letter code: Large ribosomal subunit protein bL36c (37 aa).

This sequence belongs to the bacterial ribosomal protein bL36 family.

It localises to the plastid. It is found in the chloroplast. This chain is Large ribosomal subunit protein bL36c, found in Phalaenopsis aphrodite subsp. formosana (Moth orchid).